The following is a 367-amino-acid chain: B2 bradykinin receptor (367 aa).

The Extracellular segment spans residues 1–36 (MLNITSQVLAPALNGSVSQSSGCPNTEWSGWLNVIQ). Residues Asn3 and Asn14 are each glycosylated (N-linked (GlcNAc...) asparagine). Residues 37-60 (APFLWVLFVLATLENLFVLSVFCL) form a helical membrane-spanning segment. Topologically, residues 61–69 (HKSSCTVAE) are cytoplasmic. A helical membrane pass occupies residues 70–94 (VYLGNLAAADLILACGLPFWAVTIA). Residues 95 to 107 (NHFDWLFGEALCR) are Extracellular-facing. Cys106 and Cys187 are joined by a disulfide. A helical membrane pass occupies residues 108–129 (VVNTMIYMNLYSSICFLMLVSI). The Cytoplasmic portion of the chain corresponds to 130 to 151 (DRYLALVKTMSIGRMRRVRWAK). Phosphotyrosine is present on Tyr132. The chain crosses the membrane as a helical span at residues 152–174 (LYSLVIWGCTLLLSSPMLVFRTM). At 175 to 197 (KDYRDEGYNVTACIIDYPSRSWE) the chain is on the extracellular side. A glycan (N-linked (GlcNAc...) asparagine) is linked at Asn183. The chain crosses the membrane as a helical span at residues 198–224 (VFTNVLLNLVGFLLPLSVITFCTVQIL). Residues 225-243 (QVLRNNEMQKFKEIQTERR) lie on the Cytoplasmic side of the membrane. The helical transmembrane segment at 244–268 (ATVLVLAVLLLFVVCWLPFQVSTFL) threads the bilayer. Topologically, residues 269-287 (DTLLKLGVLSSCWDEHVID) are extracellular. A helical transmembrane segment spans residues 288-311 (VITQVGSFMGYSNSCLNPLVYVIV). The Cytoplasmic portion of the chain corresponds to 312 to 367 (GKRFRKKSREVYRAACPKAGCVLEPVQAESSMGTLRTSISVERQIHKLPEWTRSSQ). A Phosphotyrosine modification is found at Tyr323. The S-palmitoyl cysteine moiety is linked to residue Cys327. Ser342 is subject to Phosphoserine. At Thr345 the chain carries Phosphothreonine. Phosphoserine; by GRK6 is present on residues Ser349 and Ser351.

This sequence belongs to the G-protein coupled receptor 1 family. Bradykinin receptor subfamily. BDKRB2 sub-subfamily. Forms a complex with PECAM1 and GNAQ. Interacts with PECAM1.

Its subcellular location is the cell membrane. In terms of biological role, receptor for bradykinin. It is associated with G proteins that activate a phosphatidylinositol-calcium second messenger system. The polypeptide is B2 bradykinin receptor (BDKRB2) (Oryctolagus cuniculus (Rabbit)).